Reading from the N-terminus, the 269-residue chain is Tryptophan synthase alpha chain (269 aa).

Residues Glu54 and Asp65 each act as proton acceptor in the active site.

It belongs to the TrpA family. As to quaternary structure, tetramer of two alpha and two beta chains.

The enzyme catalyses (1S,2R)-1-C-(indol-3-yl)glycerol 3-phosphate + L-serine = D-glyceraldehyde 3-phosphate + L-tryptophan + H2O. The protein operates within amino-acid biosynthesis; L-tryptophan biosynthesis; L-tryptophan from chorismate: step 5/5. The alpha subunit is responsible for the aldol cleavage of indoleglycerol phosphate to indole and glyceraldehyde 3-phosphate. This is Tryptophan synthase alpha chain from Synechococcus sp. (strain CC9902).